A 227-amino-acid chain; its full sequence is Interleukin-6 (227 aa).

The first 22 residues, 1 to 22, serve as a signal peptide directing secretion; the sequence is MASISYLLAPLVLAAVLQPTAG. The interval 24–45 is disordered; sequence PLDAPTESPAGETSGEEAETGS. A disulfide bridge links Cys93 with Cys103.

The protein belongs to the IL-6 superfamily. As to quaternary structure, component of a hexamer of two molecules each of IL6, IL6R and IL6ST; first binds to IL6R to associate with the signaling subunit IL6ST. As to expression, after induction, highly expressed in spleen. Can also be expressed in kidney after incubation with PHA.

The protein resides in the secreted. Functionally, cytokine with a wide variety of biological functions in immunity, tissue regeneration, and metabolism. Binds to IL6R, then the complex associates to the signaling subunit IL6ST/gp130 to trigger the intracellular IL6-signaling pathway. The interaction with the membrane-bound IL6R and IL6ST stimulates 'classic signaling', whereas the binding of IL6 and soluble IL6R to IL6ST stimulates 'trans-signaling'. Alternatively, 'cluster signaling' occurs when membrane-bound IL6:IL6R complexes on transmitter cells activate IL6ST receptors on neighboring receiver cells. The chain is Interleukin-6 (il6) from Takifugu rubripes (Japanese pufferfish).